The primary structure comprises 2561 residues: Squalestatin hexaketide synthase (2561 aa).

The segment at 1 to 77 (MDVSKEEGQR…NGTTNITPEF (77 aa)) is disordered. Residues 20-74 (NETTNGHTNGYTNGHTNGHTNGTTNATTNGTTNGTMNGTTNGTTNRTTNGTTNIT) show a composition bias toward low complexity. The 421-residue stretch at 83–503 (QVPVAICGIG…GSNTHIIIDS (421 aa)) folds into the Ketosynthase family 3 (KS3) domain. Residues C253, H390, and H427 each act as for beta-ketoacyl synthase activity in the active site. The tract at residues 603–925 (FIFTGQGAQW…LEAIGKLFCF (323 aa)) is malonyl-CoA:ACP transacylase (MAT) domain. The segment at 972–1101 (HELLGERSLE…GLVTASVVIS (130 aa)) is N-terminal hotdog fold. Positions 972–1253 (HELLGERSLE…RGFKCKRTDE (282 aa)) are dehydratase (DH) domain. A PKS/mFAS DH domain is found at 972–1257 (HELLGERSLE…CKRTDESFIQ (286 aa)). Catalysis depends on H1004, which acts as the Proton acceptor; for dehydratase activity. Residues 1112–1257 (TFPRKVDTSR…CKRTDESFIQ (146 aa)) form a C-terminal hotdog fold region. Residue D1174 is the Proton donor; for dehydratase activity of the active site. The methyltransferase (CMet) domain stretch occupies residues 1421–1599 (SFFQAAGLNK…GFEGAGTVVL (179 aa)). The tract at residues 1826 to 2146 (GMLNTLHWVG…RGVHMGRIVV (321 aa)) is enoyl reductase (ER) (ER) domain. The tract at residues 2170-2343 (STYLLTGGMG…PASVIDIAAI (174 aa)) is ketoreductase (KR) domain. The region spanning 2472-2550 (VLFAQEIAKR…SLGRLATKRL (79 aa)) is the Carrier domain. Position 2509 is an O-(pantetheine 4'-phosphoryl)serine (S2509).

It participates in secondary metabolite biosynthesis. In terms of biological role, highly reducing polyketide synthase (HR-PKS); part of the gene cluster that mediates the biosynthesis of squalestatin S1 (SQS1, also known as zaragozic acid A), a heavily oxidized fungal polyketide that offers potent cholesterol lowering activity by targeting squalene synthase (SS). SQS1 is composed of a 2,8-dioxobicyclic[3.2.1]octane-3,4,5-tricarboxyclic acid core that is connected to two lipophilic polyketide arms. These initial steps feature the priming of an unusual benzoic acid starter unit onto the highly reducing polyketide synthase pks2, followed by oxaloacetate extension and product release to generate a tricarboxylic acid containing product. The phenylalanine ammonia lyase (PAL) M7 and the acyl-CoA ligase M9 are involved in transforming phenylalanine into benzoyl-CoA. The citrate synthase-like protein R3 is involved in connecting the C-alpha-carbons of the hexaketide chain and oxaloacetate to afford the tricarboxylic acid unit. The potential hydrolytic enzymes, M8 and M10, are in close proximity to pks2 and may participate in product release. On the other side, the tetraketide arm is synthesized by a the squalestatin tetraketide synthase pks1 and enzymatically esterified to the core in the last biosynthetic step, by the acetyltransferase M4. The biosynthesis of the tetraketide must involve 3 rounds of chain extension. After the first and second rounds methyl-transfer occurs, and in all rounds of extension the ketoreductase and dehydratase are active. The enoyl reductase and C-MeT of pks1 are not active in the final round of extension. The acetyltransferase M4 appears to have a broad substrate selectivity for its acyl CoA substrate, allowing the in vitro synthesis of novel squalestatins. The biosynthesis of SQS1 requires several oxidative steps likely performed by oxidoreductases M1, R1 and R2. Finally, in support of the identification of the cluster as being responsible for SQS1 production, the cluster contains a gene encoding a putative squalene synthase (SS) R6, suggesting a likely mechanism for self-resistance. This Phoma sp. (strain ATCC 20986 / MF5453) protein is Squalestatin hexaketide synthase.